Reading from the N-terminus, the 172-residue chain is Disulfide bond formation protein B (172 aa).

The Cytoplasmic segment spans residues 1 to 11 (MNPFRWSFRAQ). A helical transmembrane segment spans residues 12-28 (FLLGFLACAGLLAYAIY). Residues 29-46 (VQLHLGLEPCPLCIFQRI) lie on the Periplasmic side of the membrane. C38 and C41 form a disulfide bridge. The chain crosses the membrane as a helical span at residues 47–63 (AFAALAVFFLIGALHGP). The Cytoplasmic segment spans residues 64–70 (RAAGARK). A helical transmembrane segment spans residues 71–88 (VYGVLSFIAAGVGMGIGA). Residues 89–145 (RHVWVQIRPKDMMSSCGPPLSFLSETMGPFEVFRTVLTGTGDCGNIDWRFLGLSMPM) lie on the Periplasmic side of the membrane. A disulfide bridge links C104 with C131. A helical transmembrane segment spans residues 146–164 (WSMVWFVGLALWALSAGFK). Residues 165 to 172 (ARRSSLHH) lie on the Cytoplasmic side of the membrane.

The protein belongs to the DsbB family.

Its subcellular location is the cell inner membrane. Functionally, required for disulfide bond formation in some periplasmic proteins. Acts by oxidizing the DsbA protein. The protein is Disulfide bond formation protein B of Xanthomonas oryzae pv. oryzae (strain MAFF 311018).